The chain runs to 209 residues: FMN-dependent NADH:quinone oxidoreductase (209 aa).

Residues Ser-9, 19–21 (SVS), and 143–146 (TRGG) contribute to the FMN site.

Belongs to the azoreductase type 1 family. Homodimer. It depends on FMN as a cofactor.

It catalyses the reaction 2 a quinone + NADH + H(+) = 2 a 1,4-benzosemiquinone + NAD(+). The catalysed reaction is N,N-dimethyl-1,4-phenylenediamine + anthranilate + 2 NAD(+) = 2-(4-dimethylaminophenyl)diazenylbenzoate + 2 NADH + 2 H(+). Functionally, quinone reductase that provides resistance to thiol-specific stress caused by electrophilic quinones. Also exhibits azoreductase activity. Catalyzes the reductive cleavage of the azo bond in aromatic azo compounds to the corresponding amines. This is FMN-dependent NADH:quinone oxidoreductase from Leptothrix cholodnii (strain ATCC 51168 / LMG 8142 / SP-6) (Leptothrix discophora (strain SP-6)).